Consider the following 261-residue polypeptide: Claudin-18 (261 aa).

Residues 1–6 (MATTTC) are Cytoplasmic-facing. Residues 7–27 (QVVGLLLSLLGLAGCIAATGM) traverse the membrane as a helical segment. The Extracellular segment spans residues 28–80 (DMWSTQDLYDNPVTSVFQYEGLWRSCVQQSSGFTECRPYFTILGLPAMLQAVR). The helical transmembrane segment at 81 to 101 (ALMIVGIVLGVIGILVSIFAL) threads the bilayer. Residues 102-122 (KCIRIGSMDDSAKAKMTLTSG) lie on the Cytoplasmic side of the membrane. The chain crosses the membrane as a helical span at residues 123–143 (IMFIISGVCAIIGVSVFANML). Topologically, residues 144–173 (VTNFWMSTANMYSGMGGMVQTVQTRYTFGA) are extracellular. Residues 174–194 (ALFVGWIAGGLTLIGGVMMCI) form a helical membrane-spanning segment. Topologically, residues 195–261 (ACRGLTPDDR…QSHPTKYDYV (67 aa)) are cytoplasmic. Residues 195 to 261 (ACRGLTPDDR…QSHPTKYDYV (67 aa)) form a required for role in regulation of RANKL-induced osteoclast differentiation region. Ser-214 carries the phosphoserine modification. A disordered region spans residues 242-261 (DGGARTEDDEQSHPTKYDYV).

It belongs to the claudin family. Interacts with TJP2/ZO-2. Interacts with TJP1/ZO-1. Interacts with YAP1 (phosphorylated); the interaction sequesters YAP1 away from the nucleus and thereby restricts transcription of YAP1 target genes. Interacts with CLDN19. Expressed in the lung (at protein level).

The protein resides in the cell junction. It localises to the tight junction. It is found in the cell membrane. In terms of biological role, involved in alveolar fluid homeostasis via regulation of alveolar epithelial tight junction composition and therefore ion transport and solute permeability, potentially via downstream regulation of the actin cytoskeleton organization and beta-2-adrenergic signaling. Required for lung alveolarization and maintenance of the paracellular alveolar epithelial barrier. Acts to maintain epithelial progenitor cell proliferation and organ size, via regulation of YAP1 localization away from the nucleus and thereby restriction of YAP1 target gene transcription. Acts as a negative regulator of RANKL-induced osteoclast differentiation, potentially via relocation of TJP2/ZO-2 away from the nucleus, subsequently involved in bone resorption in response to calcium deficiency. Mediates the osteoprotective effects of estrogen, potentially via acting downstream of estrogen signaling independently of RANKL signaling pathways. Its function is as follows. Required for the formation of the gastric paracellular barrier via its role in tight junction formation, thereby involved in the response to gastric acidification. The sequence is that of Claudin-18 from Rattus norvegicus (Rat).